Consider the following 335-residue polypeptide: Anthranilate phosphoribosyltransferase (335 aa).

Residues glycine 79, 82-83 (GD), serine 87, 89-92 (NIST), 107-115 (KHGNRSITS), and serine 119 each bind 5-phospho-alpha-D-ribose 1-diphosphate. Anthranilate is bound at residue glycine 79. Serine 91 serves as a coordination point for Mg(2+). Position 110 (asparagine 110) interacts with anthranilate. Arginine 165 lines the anthranilate pocket. Residues aspartate 224 and glutamate 225 each contribute to the Mg(2+) site.

Belongs to the anthranilate phosphoribosyltransferase family. In terms of assembly, homodimer. It depends on Mg(2+) as a cofactor.

The enzyme catalyses N-(5-phospho-beta-D-ribosyl)anthranilate + diphosphate = 5-phospho-alpha-D-ribose 1-diphosphate + anthranilate. It participates in amino-acid biosynthesis; L-tryptophan biosynthesis; L-tryptophan from chorismate: step 2/5. Catalyzes the transfer of the phosphoribosyl group of 5-phosphorylribose-1-pyrophosphate (PRPP) to anthranilate to yield N-(5'-phosphoribosyl)-anthranilate (PRA). This chain is Anthranilate phosphoribosyltransferase, found in Lactococcus lactis subsp. lactis (strain IL1403) (Streptococcus lactis).